The following is a 342-amino-acid chain: Isopentenyl-diphosphate delta-isomerase (342 aa).

11 to 12 (RK) contacts substrate. FMN contacts are provided by residues Ser-68, 69–71 (SMT), Ser-99, and Asn-127. Position 99 to 101 (99 to 101 (SMR)) interacts with substrate. Gln-162 serves as a coordination point for substrate. Glu-163 is a Mg(2+) binding site. Residues Lys-194, Thr-224, 274–276 (GFK), and 295–296 (AG) contribute to the FMN site.

The protein belongs to the IPP isomerase type 2 family. Homooctamer. Dimer of tetramers. Requires FMN as cofactor. NADPH is required as a cofactor. The cofactor is Mg(2+).

Its subcellular location is the cytoplasm. It carries out the reaction isopentenyl diphosphate = dimethylallyl diphosphate. Functionally, involved in the biosynthesis of isoprenoids. Catalyzes the 1,3-allylic rearrangement of the homoallylic substrate isopentenyl (IPP) to its allylic isomer, dimethylallyl diphosphate (DMAPP). The polypeptide is Isopentenyl-diphosphate delta-isomerase (Rickettsia conorii (strain ATCC VR-613 / Malish 7)).